A 144-amino-acid chain; its full sequence is MKLNELKPAEGSRKVRNRVGRGDSSGNGKTAGRGQKGQKARSKTRLGFEGGQMPLYRRIPKRGFTNINRKEFAVVNLSALNVFDDGAEVTPAALVEAGIVKNEKAGIKILGNGELSKKLTVKAAKFSKSAAEAIEAAGGKTEVI.

The segment covering 1 to 13 has biased composition (basic and acidic residues); the sequence is MKLNELKPAEGSR. Residues 1-47 form a disordered region; that stretch reads MKLNELKPAEGSRKVRNRVGRGDSSGNGKTAGRGQKGQKARSKTRLG. The span at 23–35 shows a compositional bias: gly residues; sequence DSSGNGKTAGRGQ.

It belongs to the universal ribosomal protein uL15 family. As to quaternary structure, part of the 50S ribosomal subunit.

Binds to the 23S rRNA. The chain is Large ribosomal subunit protein uL15 from Levilactobacillus brevis (strain ATCC 367 / BCRC 12310 / CIP 105137 / JCM 1170 / LMG 11437 / NCIMB 947 / NCTC 947) (Lactobacillus brevis).